The primary structure comprises 458 residues: NALCN channel auxiliary factor 1 (458 aa).

Residues 40-60 form a helical membrane-spanning segment; that stretch reads LSLASLLFFTVLLSDHLWFCA. The segment at 70-155 is disordered; sequence KEHQQQQRQQ…NRGKDDRGKA (86 aa). Positions 75–96 are enriched in low complexity; that stretch reads QQRQQQQQQQQQRQRQQQQQQR. The segment covering 136-145 has biased composition (gly residues); the sequence is GDGGGGGGKG. 7 cysteine pairs are disulfide-bonded: cysteine 191–cysteine 261, cysteine 226–cysteine 313, cysteine 246–cysteine 261, cysteine 304–cysteine 341, cysteine 324–cysteine 377, cysteine 330–cysteine 376, and cysteine 334–cysteine 361. The N-linked (GlcNAc...) asparagine glycan is linked to asparagine 217. The helical transmembrane segment at 417–437 threads the bilayer; the sequence is LKLCVLVLILLHTVLTASAAQ.

The protein belongs to the NALF family. Component of the NALCN channel complex. NALCN complex consists of NALCN and auxiliary subunits, UNC79, UNC80 and NACL1. These auxiliary subunits are essential for the NALCN channel function.

The protein resides in the cell membrane. In terms of biological role, auxillary component of the NALCN sodium channel complex, a channel that regulates the resting membrane potential and controls neuronal excitability. In Homo sapiens (Human), this protein is NALCN channel auxiliary factor 1.